Here is a 485-residue protein sequence, read N- to C-terminus: Pyruvate kinase (485 aa).

Residue arginine 33 coordinates substrate. Residues asparagine 35, serine 37, aspartate 67, and threonine 68 each coordinate K(+). An ATP-binding site is contributed by 35 to 38 (NFSH). Positions 74 and 155 each coordinate ATP. Residue glutamate 221 coordinates Mg(2+). Glycine 244, aspartate 245, and threonine 277 together coordinate substrate. Aspartate 245 serves as a coordination point for Mg(2+).

Belongs to the pyruvate kinase family. Homotetramer. The cofactor is Mg(2+). Requires K(+) as cofactor.

It carries out the reaction pyruvate + ATP = phosphoenolpyruvate + ADP + H(+). The protein operates within carbohydrate degradation; glycolysis; pyruvate from D-glyceraldehyde 3-phosphate: step 5/5. The sequence is that of Pyruvate kinase (pyk) from Chlamydia trachomatis serovar L2 (strain ATCC VR-902B / DSM 19102 / 434/Bu).